A 427-amino-acid chain; its full sequence is MGRFKGENRSQARWIMGGVSKGRGSGKSRKPRQAAFGQTGARVCPSSPQQDAVPRFRWPGDAECASSTHTPTMSGCKLPMGLCPDMCPAAERARRERERRLHRLEVEPGGRGNAPRADPKRTVKEYSRPAAGKPRPPPSLLRPPPVLLATVRYLAGEVAGRGDVSCAEVASFVADRLRAVRLDLSLQGVDDADAATVLEAALATLLAVVARVRPEETRGAADPVLLQTQVQEGFGSLRRCYARGKGPYPRQAAFQGLFLLYNLGSVEALQEVLQLPAALRACPPLQAALAVDAAFREDNHARLFRLLRTLPYLQSCAVQEHIGYARRKALARLSRALSTPKGQTLPLDFIEHFLALDGLQEARDLCQAHGLTLDKDRVVFLRGQYSEEGLPPPGAYHILVGNKLQGHTLEDVVMAEEGDIHRPGSAA.

2 stretches are compositionally biased toward basic and acidic residues: residues 1–10 (MGRFKGENRS) and 117–127 (ADPKRTVKEYS). Disordered regions lie at residues 1–53 (MGRF…QDAV) and 101–143 (LHRL…LLRP). Pro residues predominate over residues 134–143 (PRPPPSLLRP). The region spanning 229–397 (QVQEGFGSLR…EGLPPPGAYH (169 aa)) is the PCI domain. Serine 425 is modified (phosphoserine).

It belongs to the SAC3 family. May be part of a SEM1-containing complex. As to expression, present in spleen cells (at protein level).

The protein resides in the cytoplasm. The protein localises to the cytoskeleton. It localises to the microtubule organizing center. It is found in the centrosome. Its subcellular location is the spindle. Its function is as follows. Involved in centrosome duplication and mitotic progression. In Mus musculus (Mouse), this protein is SAC3 domain-containing protein 1 (Sac3d1).